Consider the following 114-residue polypeptide: MVSLWVEGTFPPPGFGLAHVACSGHGMKQKRKPASSEPTPEDALGGSAVPVRFHLHPEGLLWCSRCFFSHGPKGSEPPGRSAGLQGATERSGRPSVQAQAQACENLVPATVWDG.

2 disordered regions span residues 26 to 45 (GMKQ…DALG) and 72 to 98 (PKGS…SVQA).

This is an uncharacterized protein from Homo sapiens (Human).